The chain runs to 535 residues: 2-(3-amino-3-carboxypropyl)histidine synthase subunit 2 (535 aa).

Residues Cys-107, Cys-128, and Cys-342 each contribute to the [4Fe-4S] cluster site. Over residues 390–401 (NDKPEDASKESE) the composition is skewed to basic and acidic residues. Disordered regions lie at residues 390 to 471 (NDKP…QQND) and 512 to 535 (ASTLVEEGRSGVARGYEVGESGRH). The segment covering 404 to 424 (VAEEEVEFEDVAGGVEGEESA) has biased composition (acidic residues). The segment covering 449–471 (NPSTTAETEANSDGQPTSTQQND) has biased composition (polar residues).

This sequence belongs to the DPH1/DPH2 family. DPH2 subfamily. In terms of assembly, component of the 2-(3-amino-3-carboxypropyl)histidine synthase complex composed of DPH1, DPH2, DPH3 and a NADH-dependent reductase, predominantly CBR1. [4Fe-4S] cluster is required as a cofactor.

It is found in the cytoplasm. The protein operates within protein modification; peptidyl-diphthamide biosynthesis. Functionally, required for the first step of diphthamide biosynthesis, a post-translational modification of histidine which occurs in elongation factor 2. DPH1 and DPH2 transfer a 3-amino-3-carboxypropyl (ACP) group from S-adenosyl-L-methionine (SAM) to a histidine residue, the reaction is assisted by a reduction system comprising DPH3 and a NADH-dependent reductase, predominantly CBR1. Facilitates the reduction of the catalytic iron-sulfur cluster found in the DPH1 subunit. The sequence is that of 2-(3-amino-3-carboxypropyl)histidine synthase subunit 2 (DPH2) from Gibberella zeae (strain ATCC MYA-4620 / CBS 123657 / FGSC 9075 / NRRL 31084 / PH-1) (Wheat head blight fungus).